Reading from the N-terminus, the 319-residue chain is DNA-directed RNA polymerase subunit alpha (319 aa).

The interval 1–227 is alpha N-terminal domain (alpha-NTD); sequence MKEFIFPMKI…KHMNMLTNIS (227 aa). The segment at 242-319 is alpha C-terminal domain (alpha-CTD); the sequence is LMEKLTFSIE…NIGEQRSSEV (78 aa).

This sequence belongs to the RNA polymerase alpha chain family. As to quaternary structure, homodimer. The RNAP catalytic core consists of 2 alpha, 1 beta, 1 beta' and 1 omega subunit. When a sigma factor is associated with the core the holoenzyme is formed, which can initiate transcription.

The enzyme catalyses RNA(n) + a ribonucleoside 5'-triphosphate = RNA(n+1) + diphosphate. Its function is as follows. DNA-dependent RNA polymerase catalyzes the transcription of DNA into RNA using the four ribonucleoside triphosphates as substrates. This chain is DNA-directed RNA polymerase subunit alpha, found in Hydrogenobaculum sp. (strain Y04AAS1).